A 260-amino-acid chain; its full sequence is Triosephosphate isomerase (260 aa).

Asn-10–Lys-12 is a substrate binding site. His-100 serves as the catalytic Electrophile. The Proton acceptor role is filled by Glu-172. Residues Gly-178, Ser-218, and Gly-239 to Gly-240 each bind substrate.

The protein belongs to the triosephosphate isomerase family. In terms of assembly, homodimer.

It localises to the cytoplasm. The catalysed reaction is D-glyceraldehyde 3-phosphate = dihydroxyacetone phosphate. It functions in the pathway carbohydrate biosynthesis; gluconeogenesis. It participates in carbohydrate degradation; glycolysis; D-glyceraldehyde 3-phosphate from glycerone phosphate: step 1/1. Involved in the gluconeogenesis. Catalyzes stereospecifically the conversion of dihydroxyacetone phosphate (DHAP) to D-glyceraldehyde-3-phosphate (G3P). In Corynebacterium diphtheriae (strain ATCC 700971 / NCTC 13129 / Biotype gravis), this protein is Triosephosphate isomerase.